Reading from the N-terminus, the 904-residue chain is Envelope glycoprotein (904 aa).

Topologically, residues 1–726 are extracellular; it reads MDQDLDGAER…LFDWTSWKDW (726 aa). 15 N-linked (GlcNAc...) asparagine; by host glycosylation sites follow: asparagine 131, asparagine 255, asparagine 277, asparagine 296, asparagine 329, asparagine 367, asparagine 376, asparagine 385, asparagine 410, asparagine 427, asparagine 432, asparagine 452, asparagine 491, asparagine 509, and asparagine 541. The tract at residues 556 to 576 is fusion peptide; the sequence is AVGLAIFLLVLAIMAITSSLV. A coiled-coil region spans residues 588-638; sequence AKVVERVVQNVSYIAQTQDQFTHLFRNINNRLNVLHHRVSYLEYVEEIRQK. Residue asparagine 597 is glycosylated (N-linked (GlcNAc...) asparagine; by host). Positions 615-631 are immunosuppression; sequence INNRLNVLHHRVSYLEY. 2 N-linked (GlcNAc...) asparagine; by host glycosylation sites follow: asparagine 663 and asparagine 694. Residues 676–712 are a coiled coil; sequence DEYDKIEEKILKIRVDWLNSSLSDTQDTFGLETSIFD. A helical membrane pass occupies residues 727–747; the sequence is IKIIIVIIVLWLLIKILLGML. At 748 to 904 the chain is on the cytoplasmic side; sequence RSCAKVSQNY…AWYEGLRGSQ (157 aa). Disordered regions lie at residues 761–783 and 862–904; these read PAEE…PASG and GGTS…RGSQ. The segment covering 878–887 has biased composition (polar residues); that stretch reads WTGSREQNNP.

The mature envelope protein (Env) consists of a trimer of SU-TM heterodimers attached by non-covalent interactions or by a labile interchain disulfide bond. Post-translationally, specific enzymatic cleavages in vivo yield mature proteins. Envelope glycoproteins are synthesized as an inactive precursor that is N-glycosylated and processed likely by host cell furin or by a furin-like protease in the Golgi to yield the mature SU and TM proteins. The cleavage site between SU and TM requires the minimal sequence [KR]-X-[KR]-R.

It is found in the virion membrane. The protein resides in the host cell membrane. The surface protein (SU) attaches the virus to the host cell by binding to its receptor. This interaction triggers the refolding of the transmembrane protein (TM) and is thought to activate its fusogenic potential by unmasking its fusion peptide. Fusion occurs at the host cell plasma membrane. Its function is as follows. The transmembrane protein (TM) acts as a class I viral fusion protein. Under the current model, the protein has at least 3 conformational states: pre-fusion native state, pre-hairpin intermediate state, and post-fusion hairpin state. During viral and target cell membrane fusion, the coiled coil regions (heptad repeats) assume a trimer-of-hairpins structure, positioning the fusion peptide in close proximity to the C-terminal region of the ectodomain. The formation of this structure appears to drive apposition and subsequent fusion of viral and target cell membranes. Membranes fusion leads to delivery of the nucleocapsid into the cytoplasm. This is Envelope glycoprotein (env) from Bovine immunodeficiency virus (strain R29) (BIV).